We begin with the raw amino-acid sequence, 747 residues long: DNA-directed RNA polymerase subunit beta' (747 aa).

Zn(2+) contacts are provided by Cys70, Cys72, Cys97, and Cys100. Mg(2+)-binding residues include Asp502, Asp504, and Asp506.

The protein belongs to the RNA polymerase beta' chain family. RpoC1 subfamily. In plastids the minimal PEP RNA polymerase catalytic core is composed of four subunits: alpha, beta, beta', and beta''. When a (nuclear-encoded) sigma factor is associated with the core the holoenzyme is formed, which can initiate transcription. Mg(2+) serves as cofactor. Requires Zn(2+) as cofactor.

Its subcellular location is the plastid. The protein localises to the chloroplast. The catalysed reaction is RNA(n) + a ribonucleoside 5'-triphosphate = RNA(n+1) + diphosphate. Its function is as follows. DNA-dependent RNA polymerase catalyzes the transcription of DNA into RNA using the four ribonucleoside triphosphates as substrates. This Gnetum parvifolium (Small-leaved jointfir) protein is DNA-directed RNA polymerase subunit beta'.